We begin with the raw amino-acid sequence, 1463 residues long: Alpha-agarase (1463 aa).

A signal peptide spans 1–27 (MITSSKKIVSAMLSTSLWIGVASAAYA). The propeptide occupies 28 to 684 (ETTNVEAEGY…PSTLSESIFT (657 aa)). Disordered stretches follow at residues 166-191 (VTPE…PGTP) and 512-549 (TDDI…PQPG). The span at 518-536 (CANTPSGETANATGCSSSQ) shows a compositional bias: polar residues. A PA14 domain is found at 534–677 (SSQEGGGTDP…GGTNFVHPST (144 aa)). The CBM6 domain occupies 701 to 832 (IIVELESFVF…QWSGDRVRFT (132 aa)).

This sequence belongs to the glycosyl hydrolase 96 family. As to quaternary structure, monomer. Requires Ca(2+) as cofactor.

It carries out the reaction Endohydrolysis of 1,3-alpha-L-galactosidic linkages in agarose, yielding agarotetraose as the major product.. Its function is as follows. Alpha-agarase. Hydrolyzes agarose, agarohexaose, neoagarohexaose and porphyran. Hydrolysis of porphyran by this enzyme improves its antioxidant activity. Does not hydrolyze kappa-carrageenan, iota-carrageenen or lambda-carrageenan. This is Alpha-agarase from Thalassotalea agarivorans (Thalassomonas agarivorans).